The sequence spans 824 residues: Glycogen phosphorylase (824 aa).

Position 667 is an N6-(pyridoxal phosphate)lysine (Lys-667).

This sequence belongs to the glycogen phosphorylase family. The cofactor is pyridoxal 5'-phosphate.

It catalyses the reaction [(1-&gt;4)-alpha-D-glucosyl](n) + phosphate = [(1-&gt;4)-alpha-D-glucosyl](n-1) + alpha-D-glucose 1-phosphate. Phosphorylase is an important allosteric enzyme in carbohydrate metabolism. Enzymes from different sources differ in their regulatory mechanisms and in their natural substrates. However, all known phosphorylases share catalytic and structural properties. The protein is Glycogen phosphorylase (glgP) of Chlamydia pneumoniae (Chlamydophila pneumoniae).